The primary structure comprises 202 residues: Succinate dehydrogenase cytochrome b558 subunit (202 aa).

5 helical membrane-spanning segments follow: residues 12-31, 60-79, 93-113, 135-155, and 178-196; these read LHSLLGVIPVGIFLIQHLVV, IFIIFLPLIYHAVYGVYIAF, NWLFVLQRVTGIITLIFVSWH, ILSSPAMLGFYIVGVLSTIFH, and ISTYVTLIIFVALSYVGLK. Heme is bound by residues His28, His70, His113, and His155.

The protein belongs to the cytochrome b558 family. Part of an enzyme complex containing three subunits: a flavoprotein, an iron-sulfur protein and cytochrome b-558.

It is found in the cell membrane. It participates in carbohydrate metabolism; tricarboxylic acid cycle. Di-heme cytochrome of the succinate dehydrogenase complex. The polypeptide is Succinate dehydrogenase cytochrome b558 subunit (sdhC) (Bacillus subtilis (strain 168)).